A 553-amino-acid polypeptide reads, in one-letter code: 4-coumarate--CoA ligase (553 aa).

ATP is bound by residues Ser-198, Ser-199, Gly-200, Thr-201, Thr-202, and Lys-206. Residues Tyr-248 and Ser-252 each coordinate (E)-4-coumaroyl-AMP. Lys-269 lines the CoA pocket. The tract at residues 271-340 (EIVPFLELIQ…AKFPNAKLGQ (70 aa)) is SBD1. Positions 318, 340, 341, 345, and 353 each coordinate (E)-4-coumaroyl-AMP. The ATP site is built by Gln-340, Gly-341, and Thr-345. Residues 341 to 408 (GYGMTEAGPV…IRGDQIMKGY (68 aa)) form an SBD2 region. ATP is bound by residues Asp-429 and Arg-444. Residues Lys-446 and Lys-450 each coordinate (E)-4-coumaroyl-AMP. Lys-452 and Gly-453 together coordinate CoA. ATP is bound at residue Lys-535.

The protein belongs to the ATP-dependent AMP-binding enzyme family. Mg(2+) serves as cofactor.

It carries out the reaction (E)-4-coumarate + ATP + CoA = (E)-4-coumaroyl-CoA + AMP + diphosphate. The catalysed reaction is (E)-4-coumarate + ATP + H(+) = (E)-4-coumaroyl-AMP + diphosphate. It catalyses the reaction (E)-4-coumaroyl-AMP + CoA = (E)-4-coumaroyl-CoA + AMP + H(+). Its pathway is phytoalexin biosynthesis; 3,4',5-trihydroxystilbene biosynthesis; 3,4',5-trihydroxystilbene from trans-4-coumarate: step 1/2. Carboxylate--CoA ligase that may use 4-coumarate as substrate. Follows a two-step reaction mechanism, wherein the carboxylate substrate first undergoes adenylation by ATP, followed by a thioesterification in the presence of CoA to yield the final CoA thioester. The chain is 4-coumarate--CoA ligase from Vanilla planifolia (Vanilla).